Here is a 505-residue protein sequence, read N- to C-terminus: Maturase K (505 aa).

This sequence belongs to the intron maturase 2 family. MatK subfamily.

The protein localises to the plastid. It localises to the chloroplast. Usually encoded in the trnK tRNA gene intron. Probably assists in splicing its own and other chloroplast group II introns. The polypeptide is Maturase K (Ulmus parvifolia (Chinese elm)).